We begin with the raw amino-acid sequence, 313 residues long: Cytochrome c biogenesis protein CcsA (313 aa).

Helical transmembrane passes span 9–29, 44–64, 71–91, 111–131, 143–163, 217–237, 244–264, and 278–298; these read ILTHISFSIVSIVITIHLITF, GIIVTFFCITGLLVTRWVSSG, LYESLIFLSWSFSLIHIIPYF, GFATSGILTEIHQSGILVPAL, MILGYAALLCGSLLSVALLVI, VISLGFTFLTIGILSGAVWAN, WNWDPKETWAFITWIVFAIYL, and AIVASIGFLIIWICYFGVNLL.

Belongs to the CcmF/CycK/Ccl1/NrfE/CcsA family. In terms of assembly, may interact with Ccs1.

The protein localises to the plastid. The protein resides in the chloroplast thylakoid membrane. In terms of biological role, required during biogenesis of c-type cytochromes (cytochrome c6 and cytochrome f) at the step of heme attachment. The protein is Cytochrome c biogenesis protein CcsA of Solanum lycopersicum (Tomato).